The primary structure comprises 232 residues: UPF0173 metal-dependent hydrolase Msil_0741 (232 aa).

Belongs to the UPF0173 family.

The chain is UPF0173 metal-dependent hydrolase Msil_0741 from Methylocella silvestris (strain DSM 15510 / CIP 108128 / LMG 27833 / NCIMB 13906 / BL2).